The sequence spans 401 residues: Imidazolonepropionase (401 aa).

Residues H66 and H68 each contribute to the Fe(3+) site. Residues H66 and H68 each coordinate Zn(2+). The 4-imidazolone-5-propanoate site is built by R75, Y138, and H171. N-formimidoyl-L-glutamate is bound at residue Y138. A Fe(3+)-binding site is contributed by H236. H236 contacts Zn(2+). 4-imidazolone-5-propanoate is bound at residue Q239. D311 contacts Fe(3+). D311 provides a ligand contact to Zn(2+). N-formimidoyl-L-glutamate-binding residues include N313 and G315. T316 contacts 4-imidazolone-5-propanoate.

Belongs to the metallo-dependent hydrolases superfamily. HutI family. Zn(2+) serves as cofactor. Fe(3+) is required as a cofactor.

The protein localises to the cytoplasm. The catalysed reaction is 4-imidazolone-5-propanoate + H2O = N-formimidoyl-L-glutamate. It functions in the pathway amino-acid degradation; L-histidine degradation into L-glutamate; N-formimidoyl-L-glutamate from L-histidine: step 3/3. In terms of biological role, catalyzes the hydrolytic cleavage of the carbon-nitrogen bond in imidazolone-5-propanoate to yield N-formimidoyl-L-glutamate. It is the third step in the universal histidine degradation pathway. The protein is Imidazolonepropionase of Pseudomonas savastanoi pv. phaseolicola (strain 1448A / Race 6) (Pseudomonas syringae pv. phaseolicola (strain 1448A / Race 6)).